The following is a 113-amino-acid chain: Prefoldin subunit beta (113 aa).

The protein belongs to the prefoldin subunit beta family. Heterohexamer of two alpha and four beta subunits.

The protein localises to the cytoplasm. In terms of biological role, molecular chaperone capable of stabilizing a range of proteins. Seems to fulfill an ATP-independent, HSP70-like function in archaeal de novo protein folding. This chain is Prefoldin subunit beta (pfdB), found in Methanocaldococcus jannaschii (strain ATCC 43067 / DSM 2661 / JAL-1 / JCM 10045 / NBRC 100440) (Methanococcus jannaschii).